Here is a 158-residue protein sequence, read N- to C-terminus: Snaclec convulxin subunit alpha (158 aa).

A signal peptide spans 1 to 23 (MGRFIFVSFGLLVLFLSLSGTGA). Cystine bridges form between Cys-27-Cys-38, Cys-55-Cys-152, and Cys-127-Cys-144. A C-type lectin domain is found at 34 to 158 (YDQHCYRIFN…PFVCKFPPQC (125 aa)).

Belongs to the snaclec family. As to quaternary structure, tetramer of heterodimers of alpha and beta subunits (alphabeta)(4); disulfide-linked. In terms of tissue distribution, expressed by the venom gland.

The protein resides in the secreted. Functionally, snake venom lectin that activates platelets by binding to the platelet collagen receptor glycoprotein VI (GP6). The indirect activation of integrin alpha-IIb/beta-3 (ITGA2B/ITGB3) also induced by the toxin is upstream the cytoskeletal translocation of GPIb, FcRgamma (FCER1G) and 14-3-3zeta (YWHAZ). The protein is Snaclec convulxin subunit alpha of Crotalus durissus terrificus (South American rattlesnake).